The chain runs to 95 residues: Large ribosomal subunit protein uL23c (95 aa).

It belongs to the universal ribosomal protein uL23 family. As to quaternary structure, part of the 50S ribosomal subunit.

It is found in the plastid. Its subcellular location is the chloroplast. In terms of biological role, binds to 23S rRNA. This Chlamydomonas reinhardtii (Chlamydomonas smithii) protein is Large ribosomal subunit protein uL23c (rpl23).